The sequence spans 222 residues: UPF0758 protein YicR (222 aa).

The 123-residue stretch at 100-222 (PLLSPEMTRE…YVSFAERGWI (123 aa)) folds into the MPN domain. Zn(2+)-binding residues include H171, H173, and D184. The JAMM motif signature appears at 171–184 (HNHPSGCAEPSKAD).

Belongs to the UPF0758 family. YicR subfamily.

This is UPF0758 protein YicR from Escherichia coli (strain K12 / MC4100 / BW2952).